The primary structure comprises 51 residues: Ovomucoid (51 aa).

Residues 3–51 (VDCSGYPKPDCTLESFPLCGSDNQTYSNKCAFCNAAVERNVTLRHLGEC) enclose the Kazal-like domain. Intrachain disulfides connect C5/C35, C13/C32, and C21/C51. An N-linked (GlcNAc...) asparagine glycan is attached at N42.

Its subcellular location is the secreted. This Rhynchotus rufescens (Red-winged tinamou) protein is Ovomucoid.